A 252-amino-acid chain; its full sequence is MTEPILQIRDLSVYYNQKKTLKDVSLDLYPNEITALIGPSGSGKSTLLRSINRMNDLNPEVTITGSIVYNGHNIYSPRTDTVDLRKEIGMVFQQPNPFPMSIYENVVYGLHLKGIRDKSILDHAVESSLKGASIWNEVKDRLHDSAVGLSGGQQQRVCIARVLATSPRIILLDEPTSALDPISAGKIEETLLLLKKDYTLAIVTRSMQQASRLSDRTGFFLEGDLLECGPTKAMFMNPKRKETEDYISGKFG.

One can recognise an ABC transporter domain in the interval 6 to 247 (LQIRDLSVYY…PKRKETEDYI (242 aa)). ATP is bound at residue 38–45 (GPSGSGKS).

It belongs to the ABC transporter superfamily. Phosphate importer (TC 3.A.1.7) family. In terms of assembly, the complex is composed of two ATP-binding proteins (PstB), two transmembrane proteins (PstC and PstA) and a solute-binding protein (PstS).

It is found in the cell membrane. The enzyme catalyses phosphate(out) + ATP + H2O = ADP + 2 phosphate(in) + H(+). Functionally, part of the ABC transporter complex PstSACB involved in phosphate import. Responsible for energy coupling to the transport system. The chain is Phosphate import ATP-binding protein PstB 1 from Streptococcus pyogenes serotype M6 (strain ATCC BAA-946 / MGAS10394).